The sequence spans 414 residues: Putative competence-damage inducible protein (414 aa).

This sequence belongs to the CinA family.

The sequence is that of Putative competence-damage inducible protein from Moorella thermoacetica (strain ATCC 39073 / JCM 9320).